The chain runs to 119 residues: Large ribosomal subunit protein bL20 (119 aa).

It belongs to the bacterial ribosomal protein bL20 family.

Its function is as follows. Binds directly to 23S ribosomal RNA and is necessary for the in vitro assembly process of the 50S ribosomal subunit. It is not involved in the protein synthesizing functions of that subunit. In Aromatoleum aromaticum (strain DSM 19018 / LMG 30748 / EbN1) (Azoarcus sp. (strain EbN1)), this protein is Large ribosomal subunit protein bL20.